The primary structure comprises 285 residues: Glycine--tRNA ligase alpha subunit (285 aa).

It belongs to the class-II aminoacyl-tRNA synthetase family. As to quaternary structure, tetramer of two alpha and two beta subunits.

It localises to the cytoplasm. The enzyme catalyses tRNA(Gly) + glycine + ATP = glycyl-tRNA(Gly) + AMP + diphosphate. In Granulibacter bethesdensis (strain ATCC BAA-1260 / CGDNIH1), this protein is Glycine--tRNA ligase alpha subunit.